The following is a 214-amino-acid chain: Orotate phosphoribosyltransferase (214 aa).

A 5-phospho-alpha-D-ribose 1-diphosphate-binding site is contributed by K26. An orotate-binding site is contributed by 34–35; it reads FF. Residues 72-73, R99, K100, K103, H105, and 124-132 each bind 5-phospho-alpha-D-ribose 1-diphosphate; these read YK and DDVITAGTA. Orotate is bound by residues T128 and R156.

It belongs to the purine/pyrimidine phosphoribosyltransferase family. PyrE subfamily. As to quaternary structure, homodimer. It depends on Mg(2+) as a cofactor.

The enzyme catalyses orotidine 5'-phosphate + diphosphate = orotate + 5-phospho-alpha-D-ribose 1-diphosphate. The protein operates within pyrimidine metabolism; UMP biosynthesis via de novo pathway; UMP from orotate: step 1/2. In terms of biological role, catalyzes the transfer of a ribosyl phosphate group from 5-phosphoribose 1-diphosphate to orotate, leading to the formation of orotidine monophosphate (OMP). The polypeptide is Orotate phosphoribosyltransferase (Proteus mirabilis (strain HI4320)).